An 852-amino-acid chain; its full sequence is Protein mono-ADP-ribosyltransferase PARP8 (852 aa).

2 disordered regions span residues 113 to 134 and 289 to 310; these read NGEE…NDSE and SPSY…EQDG. Residues 123–134 are compositionally biased toward acidic residues; that stretch reads VEEDSEGDNDSE. ADP-ribosylcysteine is present on residues C332, C366, C375, and C394. A PARP catalytic domain is found at 615-842; the sequence is EMTQAPYLEI…QEGGIHKEIL (228 aa). The interval 748-775 is disordered; sequence QKVSSKDEPASSSKSSNASQSQKKGQQS. Positions 757 to 775 are enriched in low complexity; sequence ASSSKSSNASQSQKKGQQS.

This sequence belongs to the ARTD/PARP family. Post-translationally, auto-mono-ADP-ribosylated.

It carries out the reaction L-cysteinyl-[protein] + NAD(+) = S-(ADP-D-ribosyl)-L-cysteinyl-[protein] + nicotinamide + H(+). Its function is as follows. Mono-ADP-ribosyltransferase that mediates mono-ADP-ribosylation of target proteins. In Mus musculus (Mouse), this protein is Protein mono-ADP-ribosyltransferase PARP8.